The following is a 279-amino-acid chain: Lysozyme-like protein 2 (279 aa).

The signal sequence occupies residues 1–19; that stretch reads MIKLLVSFTILFVLSSARP. A Ch-type lysozyme domain is found at 47–265; that stretch reads MGNAVDFSFP…AAAPKTEVNM (219 aa).

This sequence belongs to the glycosyl hydrolase 25 family. As to expression, expressed in intestine.

Its function is as follows. Involved in resistance to Gram-positive bacteria P.aeruginosa or B.thuringiensis infection. The protein is Lysozyme-like protein 2 of Caenorhabditis elegans.